The chain runs to 532 residues: uncharacterized protein (532 aa).

6 helical membrane passes run 7–26 (HSSYFSLFLIVALGFMLGRI), 30–52 (GLSLDVSAVIFIALLFGHFGVII), 59–77 (FGLVLFIFTIGIQAGPGFF), 87–109 (LILITMLIICSACLTAVGLKYAF), 116–134 (VVGLIAGALTSTPGLAVAI), and 139–161 (SPLASIAYGIAYPFGVIGVILFV). 2 RCK C-terminal domains span residues 179 to 262 (LEIE…LIGE) and 263 to 346 (REEG…LLGN). 6 helical membrane passes run 356–376 (FFPIAMGIVLGVLFGKLNISF), 386–408 (LTGGVLMVALVLSAVGKTGPIIW), 421–440 (LGLLLFLAEVGTSAGKNLVA), 445–467 (SGLLMFGVGAAITVVPMLVAVIV), 474–496 (INILDLLGTITGGMTSTPGLAAA), and 506–528 (SVAYATVYPIAMVFLILFIQVIS).

This sequence belongs to the AAE transporter (TC 2.A.81) family.

The protein resides in the cell membrane. This is an uncharacterized protein from Bacteroides thetaiotaomicron (strain ATCC 29148 / DSM 2079 / JCM 5827 / CCUG 10774 / NCTC 10582 / VPI-5482 / E50).